A 149-amino-acid polypeptide reads, in one-letter code: uncharacterized protein (149 aa).

The interval 1-103 (MFGLKVKNAE…SPTQGSRLRH (103 aa)) is disordered. Positions 7–18 (KNAEADTAKSNE) are enriched in basic and acidic residues. Positions 26–41 (TGSSTTSGSGQSTQRG) are enriched in low complexity. The span at 61-72 (GSQGNSGDQGTE) shows a compositional bias: polar residues.

Belongs to the adhesin P1 family.

This is an uncharacterized protein from Mycoplasma pneumoniae (strain ATCC 29342 / M129 / Subtype 1) (Mycoplasmoides pneumoniae).